A 318-amino-acid polypeptide reads, in one-letter code: Aldehyde oxidoreductase FAD-binding subunit PaoB (318 aa).

Residues 1–223 (MKAFTYERVN…VAVTLPPPLG (223 aa)) form the FAD-binding PCMH-type domain. FAD is bound by residues 26-34 (KFIAGGTNL) and Thr-108. [4Fe-4S] cluster-binding residues include Cys-119, Cys-129, Cys-138, and Cys-157. The FAD site is built by Asp-164, Ile-213, and Lys-230.

As to quaternary structure, heterotrimer composed of PaoA, PaoB and PaoC. The cofactor is FAD. Requires [4Fe-4S] cluster as cofactor.

It localises to the periplasm. It carries out the reaction an aldehyde + A + H2O = a carboxylate + AH2 + H(+). Its activity is regulated as follows. The complex requires PaoD for activity. Functionally, oxidizes aldehydes to the corresponding carboxylic acids with a preference for aromatic aldehydes. It might play a role in the detoxification of aldehydes to avoid cell damage. The chain is Aldehyde oxidoreductase FAD-binding subunit PaoB from Escherichia coli (strain K12).